The sequence spans 579 residues: Solute carrier family 15 member 5 (579 aa).

11 helical membrane passes run Cys77 to Val97, Leu110 to Phe130, Leu154 to Cys174, Ser191 to Ile211, Ala221 to Ile241, Thr304 to Met324, Gly343 to Ala363, Cys386 to Ile406, Val422 to Val442, Thr472 to Ile492, and Ser509 to Ser529.

It belongs to the major facilitator superfamily. Proton-dependent oligopeptide transporter (POT/PTR) (TC 2.A.17) family.

It localises to the membrane. In terms of biological role, proton oligopeptide cotransporter. This chain is Solute carrier family 15 member 5 (SLC15A5), found in Homo sapiens (Human).